The sequence spans 583 residues: Ras-specific guanine nucleotide-releasing factor RalGPS2 (583 aa).

The region spanning 49–287 (TPEEYAGQIT…YKLSLKIEPG (239 aa)) is the Ras-GEF domain. The disordered stretch occupies residues 283–314 (KIEPGTSTPRSAASREDLVGPEVGASPQSGRK). Residues serine 293, serine 296, serine 308, and serine 311 each carry the phosphoserine modification. The PXXP signature appears at 324 to 327 (PQTP). Threonine 326 is modified (phosphothreonine). 2 positions are modified to phosphoserine: serine 329 and serine 343. The residue at position 361 (threonine 361) is a Phosphothreonine. Residues 372 to 406 (DDSVMEPHAPSRGQAESSTLSSGISIGSSDGSELS) are disordered. A Phosphoserine modification is found at serine 374. Low complexity predominate over residues 387 to 403 (ESSTLSSGISIGSSDGS). The residue at position 422 (serine 422) is a Phosphoserine. The PH domain maps to 457–569 (AVTIQGVLRR…WFKHLSAACQ (113 aa)). A required for stimulation of nucleotide exchange by RALA region spans residues 459-583 (TIQGVLRRKT…QVPTNLMTFE (125 aa)).

In terms of assembly, interacts with the SH3 domains of GRB2 and PLCG1. Interacts with RALA.

The protein resides in the cytoplasm. Its subcellular location is the cell membrane. Guanine nucleotide exchange factor for the small GTPase RALA. May be involved in cytoskeletal organization. May also be involved in the stimulation of transcription in a Ras-independent fashion. This is Ras-specific guanine nucleotide-releasing factor RalGPS2 (RALGPS2) from Homo sapiens (Human).